The following is a 195-amino-acid chain: MDLTLIIDNYDSFVYNIAQIVGELGSYPIVIRNDEISIKGIERIDPDRIIISPGPGTPEKREDIGVSLDVIKYLGKRTPILGVCLGHQAIGYAFGAKIRRARKVFHGKISNIILVNNSPLSLYYGIAKEFKATRYHSLVVDEVHRPLIVDAISAEDNEIMAIHHEEYPIYGVQFHPESVGTSLGYKILYNFLNRV.

The region spanning 3-195 (LTLIIDNYDS…KILYNFLNRV (193 aa)) is the Glutamine amidotransferase type-1 domain. Position 54–56 (54–56 (GPG)) interacts with L-glutamine. Cys-84 (nucleophile; for GATase activity) is an active-site residue. Residues Gln-88 and 137–138 (SL) each bind L-glutamine. Catalysis depends on for GATase activity residues His-175 and Glu-177.

In terms of assembly, heterotetramer consisting of two non-identical subunits: a beta subunit (TrpG) and a large alpha subunit (TrpE).

It catalyses the reaction chorismate + L-glutamine = anthranilate + pyruvate + L-glutamate + H(+). It functions in the pathway amino-acid biosynthesis; L-tryptophan biosynthesis; L-tryptophan from chorismate: step 1/5. Part of a heterotetrameric complex that catalyzes the two-step biosynthesis of anthranilate, an intermediate in the biosynthesis of L-tryptophan. In the first step, the glutamine-binding beta subunit (TrpG) of anthranilate synthase (AS) provides the glutamine amidotransferase activity which generates ammonia as a substrate that, along with chorismate, is used in the second step, catalyzed by the large alpha subunit of AS (TrpE) to produce anthranilate. In the absence of TrpG, TrpE can synthesize anthranilate directly from chorismate and high concentrations of ammonia. The polypeptide is Anthranilate synthase component 2 (trpG) (Saccharolobus solfataricus (strain ATCC 35092 / DSM 1617 / JCM 11322 / P2) (Sulfolobus solfataricus)).